Here is a 666-residue protein sequence, read N- to C-terminus: MGRIVGIDLGTTNSVIGVLEAGRPFVIANAEGSRTTPSVIGYTKESELVVGQQARRQLVLNPKNTFSNLKRYVGRSWDELEENSLNVAYTIRANNQGCVRVTCPITEREYAPEELIGSIIRKLIDDAEKYLSETIDSAVITVPAYFNDSQRQATKDAALLAGVRVERILNEPTAAALAYGFDKSSSSRVLVFDLGGGTFDISLLRISNGVFDVKATSGDTQLGGNDFDQKIVEWLANDFKKEHNIDLRRDRQSLQRLNEVAEKAKQELSGLNSTPISLPFIATGPNGPLHIETKLDRKTFESLCKDLIDRLLQPVEVALQDSGWTADDINDVVLVGGGTRMPMVQQLVKTIVPVTPSQSVNPDEVVAIGAAVQAGILTGELRDLLLNDVTPLSLGLETIGGLMKVLIPRNTPIPVRQADVFSTSEANQSSVEINVWQGERQLASDNKSLGKFRLSGIPPAPRGVPQVQVAFDIDANGMLQVSATDRTTGRKQSVSINGGSNLNEDEVNNLIEEAKDKADVDRRKRASIDQRNNALTLVAQAERRLRDVSLEFGPYGAERQQRAVEVSLRDVQDFLDSDDLAELDLAVSSLQEALFGLNRRISAEKRTDNNPIQGIKNTFGSLKDELFSDDYWDDDPWDYHPNNNRVGGGRDYGGRNLDRWDNDFYN.

Thr-198 is subject to Phosphothreonine; by autocatalysis.

This sequence belongs to the heat shock protein 70 family.

In terms of biological role, acts as a chaperone. In Prochlorococcus marinus (strain SARG / CCMP1375 / SS120), this protein is Chaperone protein dnaK1 (dnaK1).